Here is a 228-residue protein sequence, read N- to C-terminus: RING1 and YY1-binding protein (228 aa).

Disordered stretches follow at residues 1 to 21 (MTMGDKKSPTRPKRQAKPAAD), 65 to 156 (QVAQ…RSTA), and 172 to 228 (DFKE…DESF). Residues 21–50 (DEGFWDCSVCTFRNSAEAFKCSICDVRKGT) form a RanBP2-type zinc finger. Residues 76–98 (PKKEKKEKVEKQDKEKPEKDKEI) are compositionally biased toward basic and acidic residues. Residue K77 forms a Glycyl lysine isopeptide (Lys-Gly) (interchain with G-Cter in SUMO2) linkage. Phosphoserine is present on S99. Positions 113 to 122 (PKSDILKDPP) are enriched in basic and acidic residues. Phosphoserine occurs at positions 123, 127, and 130. Residues 124–143 (EANSIQSANATTKTSETNHT) are compositionally biased toward polar residues. The interval 143–226 (TSRPRLKNVD…KGDMSAVNDE (84 aa)) is interaction with GABPB1 and FANK1. The span at 179–204 (SSSTSSSTVTSSAGSEQQNQSSSGSE) shows a compositional bias: low complexity. Residue S227 is modified to Phosphoserine.

Monomer. Component of repressive BCOR complex containing Polycomb group subcomplex at least composed of BCOR, PCGF1, RING1 and RNF2/RING2. Component of PCR1-like complexes. Interacts with PCGF1. Part of a PCR1-like complex that contains AUTS2, PCGF5, RNF2, CSNK2B and RYBP. Interacts with RNF2; the interaction is direct. Interacts with CBX2, YAF2, RING1 and RNF2. Interacts with ubiquitin and ubiquitinated proteins. Interacts with ubiquitinated histone H2A. Interacts with apoptin, DEDD, FADD, CASP8, CASP10, YY1 and GABPB1. Together with GABPB1 and YY1, it forms a ternary complex, probably being the bridge factor between these two transcription factors. Interacts with MDM2, and thereby inhibits ubiquitination of TP53. Identified in a ternary complex containing MDM2, TP53 and RYBP. Interacts with FANK1; may prevent the ubiquitin-mediated proteasomal degradation of FANK1. Interacts with IFT57. Monoubiquitinated. Down-regulated in breast cancer tissues and in several breast cancer cell lines (at protein level). Widely expressed with highest levels in lymphoid tissues and placenta.

It localises to the nucleus. It is found in the cytoplasm. Its subcellular location is the nucleoplasm. Functionally, component of a Polycomb group (PcG) multiprotein PRC1-like complex, a complex class required to maintain the transcriptionally repressive state of many genes, including Hox genes, throughout development. PcG PRC1-like complex acts via chromatin remodeling and modification of histones; it mediates monoubiquitination of histone H2A 'Lys-119', rendering chromatin heritably changed in its expressibility. Component of a PRC1-like complex that mediates monoubiquitination of histone H2A 'Lys-119' on the X chromosome and is required for normal silencing of one copy of the X chromosome in XX females. May stimulate ubiquitination of histone H2A 'Lys-119' by recruiting the complex to target sites. Inhibits ubiquitination and subsequent degradation of TP53, and thereby plays a role in regulating transcription of TP53 target genes. May also regulate the ubiquitin-mediated proteasomal degradation of other proteins like FANK1 to regulate apoptosis. May be implicated in the regulation of the transcription as a repressor of the transcriptional activity of E4TF1. May bind to DNA. May play a role in the repression of tumor growth and metastasis in breast cancer by down-regulating SRRM3. This Homo sapiens (Human) protein is RING1 and YY1-binding protein (RYBP).